Here is a 562-residue protein sequence, read N- to C-terminus: Arginine--tRNA ligase (562 aa).

The 'HIGH' region motif lies at 122–132 (PNIAKDMHVGH).

This sequence belongs to the class-I aminoacyl-tRNA synthetase family. In terms of assembly, monomer.

The protein localises to the cytoplasm. It carries out the reaction tRNA(Arg) + L-arginine + ATP = L-arginyl-tRNA(Arg) + AMP + diphosphate. The sequence is that of Arginine--tRNA ligase from Chlamydia felis (strain Fe/C-56) (Chlamydophila felis).